Here is a 500-residue protein sequence, read N- to C-terminus: MDRRLLLSALLFIALACSSNRVHGALNRHSFPEGFLFGTGTSAYQYEGAVDKRGQNIWDTFSRIPGKIADGSNADIANDFYHRYKEDLNLITAMNMDSFRFSIAWSRILPNGTISGGINKEGVEFYNSLINEVIAKGLKPFVTIFHFDTPQALEDKYGGFLSENIVKDYVDYADLCFSLFGDRVKLWNTFNEPTIFCMNGYATGIMAPGRCSPYASASCAAGGDSGREPYVAGHHLLVAHAEAVRLYRARYRAAHGGEVGITQVSHWFEPYDAGSAADRRARRRALDFMLGWFMHPVAHGEYPPAMRRLVGGRLPAFTAEQSEMLRGSFDFIGLNYYTSNYAVAAPPPNKLHPSYLTDNWVNATGYRNSIPIGPPAYTPIFFNYPPGLRELLLYVKRRYNNPTIYITENGTDEANNSTIPISEALKDETRIGFHYKHLQFVHKAIQEGVKVKGYFTWTFMDCFEFGDGFKDRFGLIYVDRATLARFRKKSSYWFADFLRR.

Positions 1–24 (MDRRLLLSALLFIALACSSNRVHG) are cleaved as a signal peptide. Residue glutamine 45 coordinates a beta-D-glucoside. N-linked (GlcNAc...) asparagine glycosylation is present at asparagine 111. Residues histidine 146 and 191 to 192 (NE) contribute to the a beta-D-glucoside site. Glutamate 192 acts as the Proton donor in catalysis. A disulfide bond links cysteine 211 and cysteine 219. Tyrosine 337 is an a beta-D-glucoside binding site. Residue asparagine 362 is glycosylated (N-linked (GlcNAc...) asparagine). Glutamate 408 is a binding site for a beta-D-glucoside. The active-site Nucleophile is glutamate 408. N-linked (GlcNAc...) asparagine glycosylation is found at asparagine 409, asparagine 415, and asparagine 416. Residues tryptophan 457, 464 to 465 (EF), and phenylalanine 473 contribute to the a beta-D-glucoside site.

The protein belongs to the glycosyl hydrolase 1 family.

It catalyses the reaction Hydrolysis of terminal, non-reducing beta-D-glucosyl residues with release of beta-D-glucose.. This is Beta-glucosidase 28 (BGLU28) from Oryza sativa subsp. japonica (Rice).